A 608-amino-acid chain; its full sequence is MLRSSRITAGTCVSRGWHSYTTKTPTKTAIPPAAKSSNEAKDLILSVLQSAATKREAKTYISRYAPLTGVELQKKKEGLVQRLLGVGKEQDNKEIENLTGHAPEGLLGDSEGTLRVAIIKIRDIKSIEDDLIAQMGETIARLSRLGVSPIVVVDAGKARNDFLKLDNKPFRHYQKLILQKVFKISDAIDAASPDVGARPIEGLFSMNKKGLRLAMPQMLMHPLSHGKVPVLAPLAYDDVTSEEKLVMADDVVHFLTQKLAEVPANILSVEKIIFVDPLGGIPSVERSGAHVFVNLKQELSDIAAELHMGFIPPAQREVHLANLKAMHKALKFLPPTASGLITTPAVAAIPSVGRNPIIYNVLTDRPVISPSLPVELKKTPTLETTLLREGMPVITLKSDKGLNLITEHEKGNIDLDRLWHLIEDSFGRRIDKQHYLNRVNGKIAGIIIAGDYEGAAIITWEDIDPVKAQEDRDAADRAAAEAAAAYAAGIPLPSPPLYQKLGDAVPLNPNQVAYLDKFAVLKRSQGSSSVADVVFKGMVMSQFPNELLWRSRKNNPVNKWYFDRSKGSFKIPGSEWCMFWTGRKTREQYLERFVDICTRIEPSLREEL.

An N-acetyltransferase domain is found at 402–604 (LNLITEHEKG…DICTRIEPSL (203 aa)).

It belongs to the acetyltransferase family.

It is found in the mitochondrion. It catalyses the reaction L-glutamate + acetyl-CoA = N-acetyl-L-glutamate + CoA + H(+). The protein operates within amino-acid biosynthesis; L-arginine biosynthesis; N(2)-acetyl-L-ornithine from L-glutamate: step 1/4. N-acetylglutamate synthase involved in arginine biosynthesis. This chain is Amino-acid acetyltransferase, mitochondrial (ARG2), found in Yarrowia lipolytica (strain CLIB 122 / E 150) (Yeast).